The sequence spans 397 residues: UPF0597 protein Tmel_1007 (397 aa).

It belongs to the UPF0597 family.

The sequence is that of UPF0597 protein Tmel_1007 from Thermosipho melanesiensis (strain DSM 12029 / CIP 104789 / BI429).